A 673-amino-acid chain; its full sequence is Kinesin-like protein KIFC1 (673 aa).

Phosphoserine is present on residues S6, S26, S31, and S33. 2 disordered regions span residues K23–R94 and V109–A136. Residues T60–K86 show a composition bias toward polar residues. The stretch at Q142 to E306 forms a coiled coil. In terms of domain architecture, Kinesin motor spans N310 to C663. Residues P325–F372 form a disordered region. T359 is modified (phosphothreonine). G410–T417 is a binding site for ATP.

The protein belongs to the TRAFAC class myosin-kinesin ATPase superfamily. Kinesin family. NCD subfamily. In terms of assembly, binds NUBP1 and NUBP2. Interacts with PPP1R42.

The protein localises to the nucleus. Its subcellular location is the cytoplasm. The protein resides in the cytoskeleton. It is found in the microtubule organizing center. It localises to the centrosome. The protein localises to the spindle. Its subcellular location is the early endosome. Functionally, minus end-directed microtubule-dependent motor required for bipolar spindle formation. May contribute to movement of early endocytic vesicles. Regulates cilium formation and structure. The polypeptide is Kinesin-like protein KIFC1 (KIFC1) (Homo sapiens (Human)).